A 388-amino-acid chain; its full sequence is tRNA(Ile)-lysidine synthase (388 aa).

Position 51–56 (51–56) interacts with ATP; it reads SGGRDS.

The protein belongs to the tRNA(Ile)-lysidine synthase family.

The protein resides in the cytoplasm. The enzyme catalyses cytidine(34) in tRNA(Ile2) + L-lysine + ATP = lysidine(34) in tRNA(Ile2) + AMP + diphosphate + H(+). In terms of biological role, ligates lysine onto the cytidine present at position 34 of the AUA codon-specific tRNA(Ile) that contains the anticodon CAU, in an ATP-dependent manner. Cytidine is converted to lysidine, thus changing the amino acid specificity of the tRNA from methionine to isoleucine. The sequence is that of tRNA(Ile)-lysidine synthase from Bifidobacterium longum subsp. infantis (strain ATCC 15697 / DSM 20088 / JCM 1222 / NCTC 11817 / S12).